We begin with the raw amino-acid sequence, 368 residues long: UDP-N-acetylglucosamine--N-acetylmuramyl-(pentapeptide) pyrophosphoryl-undecaprenol N-acetylglucosamine transferase (368 aa).

UDP-N-acetyl-alpha-D-glucosamine contacts are provided by residues 10-12 (TGG), Asn126, Ser200, Ile255, and Gln300.

Belongs to the glycosyltransferase 28 family. MurG subfamily.

The protein resides in the cell membrane. It carries out the reaction Mur2Ac(oyl-L-Ala-gamma-D-Glu-L-Lys-D-Ala-D-Ala)-di-trans,octa-cis-undecaprenyl diphosphate + UDP-N-acetyl-alpha-D-glucosamine = beta-D-GlcNAc-(1-&gt;4)-Mur2Ac(oyl-L-Ala-gamma-D-Glu-L-Lys-D-Ala-D-Ala)-di-trans,octa-cis-undecaprenyl diphosphate + UDP + H(+). It participates in cell wall biogenesis; peptidoglycan biosynthesis. Its function is as follows. Cell wall formation. Catalyzes the transfer of a GlcNAc subunit on undecaprenyl-pyrophosphoryl-MurNAc-pentapeptide (lipid intermediate I) to form undecaprenyl-pyrophosphoryl-MurNAc-(pentapeptide)GlcNAc (lipid intermediate II). This chain is UDP-N-acetylglucosamine--N-acetylmuramyl-(pentapeptide) pyrophosphoryl-undecaprenol N-acetylglucosamine transferase, found in Lactobacillus acidophilus (strain ATCC 700396 / NCK56 / N2 / NCFM).